The chain runs to 413 residues: Tyrosine--tRNA ligase (413 aa).

Residue Tyr33 participates in L-tyrosine binding. The 'HIGH' region signature appears at 38-47 (PTADSLHVGH). Residues Tyr162 and Gln166 each contribute to the L-tyrosine site. Positions 225–229 (KFGKT) match the 'KMSKS' region motif. Lys228 is an ATP binding site. The S4 RNA-binding domain occupies 346–413 (TSAIDAIVNV…KKKYYLLEIK (68 aa)).

It belongs to the class-I aminoacyl-tRNA synthetase family. TyrS type 1 subfamily. Homodimer.

It is found in the cytoplasm. It carries out the reaction tRNA(Tyr) + L-tyrosine + ATP = L-tyrosyl-tRNA(Tyr) + AMP + diphosphate + H(+). Functionally, catalyzes the attachment of tyrosine to tRNA(Tyr) in a two-step reaction: tyrosine is first activated by ATP to form Tyr-AMP and then transferred to the acceptor end of tRNA(Tyr). This Mesoplasma florum (strain ATCC 33453 / NBRC 100688 / NCTC 11704 / L1) (Acholeplasma florum) protein is Tyrosine--tRNA ligase.